The primary structure comprises 421 residues: Serine--tRNA ligase (421 aa).

Residue 231-233 (TGE) coordinates L-serine. Residue 262–264 (RRE) participates in ATP binding. Glutamate 285 provides a ligand contact to L-serine. 349–352 (EVSS) provides a ligand contact to ATP. Serine 384 contributes to the L-serine binding site.

The protein belongs to the class-II aminoacyl-tRNA synthetase family. Type-1 seryl-tRNA synthetase subfamily. As to quaternary structure, homodimer. The tRNA molecule binds across the dimer.

The protein localises to the cytoplasm. It catalyses the reaction tRNA(Ser) + L-serine + ATP = L-seryl-tRNA(Ser) + AMP + diphosphate + H(+). It carries out the reaction tRNA(Sec) + L-serine + ATP = L-seryl-tRNA(Sec) + AMP + diphosphate + H(+). Its pathway is aminoacyl-tRNA biosynthesis; selenocysteinyl-tRNA(Sec) biosynthesis; L-seryl-tRNA(Sec) from L-serine and tRNA(Sec): step 1/1. Functionally, catalyzes the attachment of serine to tRNA(Ser). Is also able to aminoacylate tRNA(Sec) with serine, to form the misacylated tRNA L-seryl-tRNA(Sec), which will be further converted into selenocysteinyl-tRNA(Sec). In Methylacidiphilum infernorum (isolate V4) (Methylokorus infernorum (strain V4)), this protein is Serine--tRNA ligase.